Reading from the N-terminus, the 250-residue chain is NH(3)-dependent NAD(+) synthetase (250 aa).

Glycine 30 to serine 37 lines the ATP pocket. Aspartate 36 is a Mg(2+) binding site. Arginine 117 contributes to the deamido-NAD(+) binding site. An ATP-binding site is contributed by threonine 137. A Mg(2+)-binding site is contributed by glutamate 142. Deamido-NAD(+) contacts are provided by lysine 150 and aspartate 157. Residues lysine 166 and serine 188 each coordinate ATP. A deamido-NAD(+)-binding site is contributed by histidine 234–lysine 235.

This sequence belongs to the NAD synthetase family. In terms of assembly, homodimer.

The enzyme catalyses deamido-NAD(+) + NH4(+) + ATP = AMP + diphosphate + NAD(+) + H(+). It functions in the pathway cofactor biosynthesis; NAD(+) biosynthesis; NAD(+) from deamido-NAD(+) (ammonia route): step 1/1. Its function is as follows. Catalyzes the ATP-dependent amidation of deamido-NAD to form NAD. Uses ammonia as a nitrogen source. This Mannheimia succiniciproducens (strain KCTC 0769BP / MBEL55E) protein is NH(3)-dependent NAD(+) synthetase.